We begin with the raw amino-acid sequence, 899 residues long: Protein translocase subunit SecA (899 aa).

Residues glutamine 87, 105–109 (GEGKT), and aspartate 512 contribute to the ATP site. Disordered regions lie at residues 573–592 (RRID…PGSS) and 861–899 (ITVN…CCGK). The Zn(2+) site is built by cysteine 885, cysteine 887, cysteine 896, and cysteine 897.

It belongs to the SecA family. Monomer and homodimer. Part of the essential Sec protein translocation apparatus which comprises SecA, SecYEG and auxiliary proteins SecDF-YajC and YidC. Zn(2+) serves as cofactor.

Its subcellular location is the cell inner membrane. The protein resides in the cytoplasm. The catalysed reaction is ATP + H2O + cellular proteinSide 1 = ADP + phosphate + cellular proteinSide 2.. In terms of biological role, part of the Sec protein translocase complex. Interacts with the SecYEG preprotein conducting channel. Has a central role in coupling the hydrolysis of ATP to the transfer of proteins into and across the cell membrane, serving as an ATP-driven molecular motor driving the stepwise translocation of polypeptide chains across the membrane. The polypeptide is Protein translocase subunit SecA (Trichlorobacter lovleyi (strain ATCC BAA-1151 / DSM 17278 / SZ) (Geobacter lovleyi)).